A 1053-amino-acid chain; its full sequence is DNA-directed RNA polymerase subunit beta' (1053 aa).

Zn(2+) contacts are provided by C60, C62, C75, and C78. D449, D451, and D453 together coordinate Mg(2+). Residues C818, C892, C899, and C902 each contribute to the Zn(2+) site.

This sequence belongs to the RNA polymerase beta' chain family. The RNAP catalytic core consists of 2 alpha, 1 beta, 1 beta' and 1 omega subunit. When a sigma factor is associated with the core the holoenzyme is formed, which can initiate transcription. Mg(2+) serves as cofactor. Zn(2+) is required as a cofactor.

The catalysed reaction is RNA(n) + a ribonucleoside 5'-triphosphate = RNA(n+1) + diphosphate. Functionally, DNA-dependent RNA polymerase catalyzes the transcription of DNA into RNA using the four ribonucleoside triphosphates as substrates. In Listeria grayi (Listeria murrayi), this protein is DNA-directed RNA polymerase subunit beta'.